The primary structure comprises 186 residues: Protein GrpE (186 aa).

The segment covering 1–17 (MKDEHNQEHDLSQKELE) has biased composition (basic and acidic residues). The tract at residues 1 to 32 (MKDEHNQEHDLSQKELESCENSCTCEGKKQEA) is disordered.

This sequence belongs to the GrpE family. In terms of assembly, homodimer.

The protein localises to the cytoplasm. In terms of biological role, participates actively in the response to hyperosmotic and heat shock by preventing the aggregation of stress-denatured proteins, in association with DnaK and GrpE. It is the nucleotide exchange factor for DnaK and may function as a thermosensor. Unfolded proteins bind initially to DnaJ; upon interaction with the DnaJ-bound protein, DnaK hydrolyzes its bound ATP, resulting in the formation of a stable complex. GrpE releases ADP from DnaK; ATP binding to DnaK triggers the release of the substrate protein, thus completing the reaction cycle. Several rounds of ATP-dependent interactions between DnaJ, DnaK and GrpE are required for fully efficient folding. In Helicobacter acinonychis (strain Sheeba), this protein is Protein GrpE.